Reading from the N-terminus, the 468-residue chain is Ribulose bisphosphate carboxylase large chain (468 aa).

An N6,N6,N6-trimethyllysine modification is found at Lys-5. Asn-114 and Thr-164 together coordinate substrate. The active-site Proton acceptor is Lys-166. Lys-168 contributes to the substrate binding site. The Mg(2+) site is built by Lys-192, Asp-194, and Glu-195. At Lys-192 the chain carries N6-carboxylysine. His-285 serves as the catalytic Proton acceptor. The substrate site is built by Arg-286, His-318, and Ser-370.

The protein belongs to the RuBisCO large chain family. Type I subfamily. Heterohexadecamer of 8 large chains and 8 small chains; disulfide-linked. The disulfide link is formed within the large subunit homodimers. It depends on Mg(2+) as a cofactor. The disulfide bond which can form in the large chain dimeric partners within the hexadecamer appears to be associated with oxidative stress and protein turnover.

The protein resides in the plastid. It localises to the chloroplast. The catalysed reaction is 2 (2R)-3-phosphoglycerate + 2 H(+) = D-ribulose 1,5-bisphosphate + CO2 + H2O. The enzyme catalyses D-ribulose 1,5-bisphosphate + O2 = 2-phosphoglycolate + (2R)-3-phosphoglycerate + 2 H(+). RuBisCO catalyzes two reactions: the carboxylation of D-ribulose 1,5-bisphosphate, the primary event in carbon dioxide fixation, as well as the oxidative fragmentation of the pentose substrate in the photorespiration process. Both reactions occur simultaneously and in competition at the same active site. The polypeptide is Ribulose bisphosphate carboxylase large chain (Catesbaea spinosa).